The primary structure comprises 1178 residues: Pyruvate carboxylase 1 (1178 aa).

In terms of domain architecture, Biotin carboxylation spans 18–470 (EKNKILVANR…WTTFIDDTPQ (453 aa)). K136, E220, and H255 together coordinate ATP. Residues 140–337 (RNLAAKANVP…IVAAQIQIAA (198 aa)) enclose the ATP-grasp domain. The active site involves R312. Residues 557-824 (TLLMDTTWRD…DTGINVEHVR (268 aa)) form the Pyruvate carboxyltransferase domain. Residues 565 to 569 (RDAHQ) and R638 each bind substrate. D566 contacts a divalent metal cation. A divalent metal cation-binding residues include K734, H764, and H766. Position 734 is an N6-carboxylysine (K734). T898 provides a ligand contact to substrate. Positions 1094–1169 (KADMHDPLHI…DSSDLLVLLE (76 aa)) constitute a Biotinyl-binding domain. K1135 bears the N6-biotinyllysine mark.

In terms of assembly, homotetramer. Biotin is required as a cofactor. The cofactor is Zn(2+).

The protein localises to the cytoplasm. It carries out the reaction hydrogencarbonate + pyruvate + ATP = oxaloacetate + ADP + phosphate + H(+). It functions in the pathway carbohydrate biosynthesis; gluconeogenesis. Its function is as follows. Pyruvate carboxylase catalyzes a 2-step reaction, involving the ATP-dependent carboxylation of the covalently attached biotin in the first step and the transfer of the carboxyl group to pyruvate in the second. The polypeptide is Pyruvate carboxylase 1 (PYC1) (Saccharomyces cerevisiae (strain ATCC 204508 / S288c) (Baker's yeast)).